We begin with the raw amino-acid sequence, 406 residues long: Purine nucleoside permease (406 aa).

The first 22 residues, 1 to 22, serve as a signal peptide directing secretion; that stretch reads MKLSTLFTLATTISTLTTFTIA.

Belongs to the NUP family.

With respect to regulation, mammalian nucleoside transport inhibitors dipyridamole and NBMPR inhibit adenosine transport by NUP. In terms of biological role, nucleoside permease that transports adenosine and guanosine. Does not show any transport activities towards cytidine, adenine, guanine, uridine, and uracil. This chain is Purine nucleoside permease, found in Candida albicans (Yeast).